A 178-amino-acid chain; its full sequence is Fatty-acid and retinol-binding protein 1 (178 aa).

Residues 1–16 form the signal peptide; the sequence is MYHRLILLALIGTTMA. 2 coiled-coil regions span residues 67–89 and 130–153; these read DAAL…ELRN and KQAA…ELKV.

The protein belongs to the fatty-acid and retinol-binding protein (FARBP) family. In terms of processing, not glycosylated.

It localises to the secreted. Functionally, binds retinol and different fatty acids. This Wuchereria bancrofti protein is Fatty-acid and retinol-binding protein 1.